Here is a 326-residue protein sequence, read N- to C-terminus: Phospho-N-acetylmuramoyl-pentapeptide-transferase (326 aa).

A run of 10 helical transmembrane segments spans residues 3–23 (LPTK…PYFI), 51–71 (TPTM…LFWV), 77–97 (ILLL…DDYL), 113–133 (ILIQ…YFTE), 143–163 (GIMI…VVGS), 175–195 (GLAA…AYMT), 199–219 (ISVI…LWFN), 225–245 (IFMG…TSVL), 250–270 (VLFA…VIQV), and 306–326 (IVIK…AFLL).

Belongs to the glycosyltransferase 4 family. MraY subfamily. It depends on Mg(2+) as a cofactor.

It is found in the cell membrane. The enzyme catalyses UDP-N-acetyl-alpha-D-muramoyl-L-alanyl-gamma-D-glutamyl-meso-2,6-diaminopimeloyl-D-alanyl-D-alanine + di-trans,octa-cis-undecaprenyl phosphate = di-trans,octa-cis-undecaprenyl diphospho-N-acetyl-alpha-D-muramoyl-L-alanyl-D-glutamyl-meso-2,6-diaminopimeloyl-D-alanyl-D-alanine + UMP. Its pathway is cell wall biogenesis; peptidoglycan biosynthesis. In terms of biological role, catalyzes the initial step of the lipid cycle reactions in the biosynthesis of the cell wall peptidoglycan: transfers peptidoglycan precursor phospho-MurNAc-pentapeptide from UDP-MurNAc-pentapeptide onto the lipid carrier undecaprenyl phosphate, yielding undecaprenyl-pyrophosphoryl-MurNAc-pentapeptide, known as lipid I. The sequence is that of Phospho-N-acetylmuramoyl-pentapeptide-transferase from Wolbachia sp. subsp. Brugia malayi (strain TRS).